A 93-amino-acid chain; its full sequence is Small ribosomal subunit protein uS19c (93 aa).

The protein belongs to the universal ribosomal protein uS19 family.

The protein localises to the plastid. It localises to the chloroplast. In terms of biological role, protein S19 forms a complex with S13 that binds strongly to the 16S ribosomal RNA. The polypeptide is Small ribosomal subunit protein uS19c (Stigeoclonium helveticum (Green alga)).